The following is a 186-amino-acid chain: Trafficking protein particle complex subunit 3 (186 aa).

It belongs to the TRAPP small subunits family. BET3 subfamily. As to quaternary structure, homodimer. Part of the multisubunit TRAPP (transport protein particle) complex.

The protein resides in the golgi apparatus. It localises to the cis-Golgi network. It is found in the endoplasmic reticulum. Functionally, may play a role in vesicular transport from endoplasmic reticulum to Golgi. In Dictyostelium discoideum (Social amoeba), this protein is Trafficking protein particle complex subunit 3 (trappc3).